The sequence spans 140 residues: Putative pre-16S rRNA nuclease (140 aa).

This sequence belongs to the YqgF nuclease family.

It is found in the cytoplasm. Could be a nuclease involved in processing of the 5'-end of pre-16S rRNA. In Halothermothrix orenii (strain H 168 / OCM 544 / DSM 9562), this protein is Putative pre-16S rRNA nuclease.